The sequence spans 191 residues: Phospholipase A2-delta (191 aa).

Positions 1–25 (MIRGGALTHVALGLTVFLLLAVVHS) are cleaved as a signal peptide. 6 disulfide bridges follow: Cys29–Cys56, Cys33–Cys62, Cys38–Cys115, Cys49–Cys69, Cys68–Cys93, and Cys75–Cys86. Ca(2+)-binding residues include Tyr48, Gly50, and Tyr53. His72 is a catalytic residue. Residue Asp73 participates in Ca(2+) binding. Positions 161–191 (KADTKDGLGTNQGPQTKDGSKVSVPMNPSPS) are disordered.

Belongs to the phospholipase A2 family. The cofactor is Ca(2+). As to expression, specifically expressed in flowers but at a low level. Detected specifically in the pollen.

Its subcellular location is the secreted. It localises to the endoplasmic reticulum. It carries out the reaction a 1,2-diacyl-sn-glycero-3-phosphocholine + H2O = a 1-acyl-sn-glycero-3-phosphocholine + a fatty acid + H(+). PA2 catalyzes the calcium-dependent hydrolysis of the 2-acyl groups in 3-sn-phosphoglycerides. Releases lysophospholipids (LPLs) and free fatty acids (FFAs) from membrane phospholipids in response to hormones and other external stimuli. Plays a role in pollen development and germination and tube growth. The protein is Phospholipase A2-delta (PLA2-DELTA) of Arabidopsis thaliana (Mouse-ear cress).